A 115-amino-acid polypeptide reads, in one-letter code: Na(+)/H(+) antiporter subunit C1 (115 aa).

3 helical membrane-spanning segments follow: residues 1–21 (MEII…YLVL), 28–48 (IIMG…TMGG), and 72–92 (LILT…VLAF).

Belongs to the CPA3 antiporters (TC 2.A.63) subunit C family. As to quaternary structure, may form a heterooligomeric complex that consists of seven subunits: mnhA1, mnhB1, mnhC1, mnhD1, mnhE1, mnhF1 and mnhG1.

The protein resides in the cell membrane. Mnh complex is a Na(+)/H(+) antiporter involved in Na(+) excretion. This is Na(+)/H(+) antiporter subunit C1 (mnhC1) from Staphylococcus epidermidis (strain ATCC 35984 / DSM 28319 / BCRC 17069 / CCUG 31568 / BM 3577 / RP62A).